The sequence spans 278 residues: Dermonecrotic toxin Ls4SicTox-alphaIII1ii (278 aa).

Residue His-5 is part of the active site. 2 residues coordinate Mg(2+): Glu-25 and Asp-27. The active-site Nucleophile is His-40. Residues Cys-44 and Cys-50 are joined by a disulfide bond. Mg(2+) is bound at residue Asp-84.

Belongs to the arthropod phospholipase D family. Class I subfamily. Mg(2+) serves as cofactor. Expressed by the venom gland.

The protein localises to the secreted. It carries out the reaction an N-(acyl)-sphingosylphosphocholine = an N-(acyl)-sphingosyl-1,3-cyclic phosphate + choline. The enzyme catalyses an N-(acyl)-sphingosylphosphoethanolamine = an N-(acyl)-sphingosyl-1,3-cyclic phosphate + ethanolamine. It catalyses the reaction a 1-acyl-sn-glycero-3-phosphocholine = a 1-acyl-sn-glycero-2,3-cyclic phosphate + choline. The catalysed reaction is a 1-acyl-sn-glycero-3-phosphoethanolamine = a 1-acyl-sn-glycero-2,3-cyclic phosphate + ethanolamine. Functionally, dermonecrotic toxins cleave the phosphodiester linkage between the phosphate and headgroup of certain phospholipids (sphingolipid and lysolipid substrates), forming an alcohol (often choline) and a cyclic phosphate. This toxin acts on sphingomyelin (SM). It may also act on ceramide phosphoethanolamine (CPE), lysophosphatidylcholine (LPC) and lysophosphatidylethanolamine (LPE), but not on lysophosphatidylserine (LPS), and lysophosphatidylglycerol (LPG). It acts by transphosphatidylation, releasing exclusively cyclic phosphate products as second products. Induces dermonecrosis, hemolysis, increased vascular permeability, edema, inflammatory response, and platelet aggregation. This chain is Dermonecrotic toxin Ls4SicTox-alphaIII1ii, found in Loxosceles sp. (strain 4 GJB-2008) (Recluse spider).